Here is a 304-residue protein sequence, read N- to C-terminus: Ornithine carbamoyltransferase (304 aa).

Residues 53 to 56, Gln80, Arg104, and 131 to 134 each bind carbamoyl phosphate; these read STRT and HPCQ. L-ornithine contacts are provided by residues Asn162, Asp222, and 226–227; that span reads SM. Carbamoyl phosphate contacts are provided by residues 261 to 262 and Arg289; that span reads CL.

Belongs to the aspartate/ornithine carbamoyltransferase superfamily. OTCase family.

It localises to the cytoplasm. The catalysed reaction is carbamoyl phosphate + L-ornithine = L-citrulline + phosphate + H(+). It functions in the pathway amino-acid biosynthesis; L-arginine biosynthesis; L-arginine from L-ornithine and carbamoyl phosphate: step 1/3. Functionally, reversibly catalyzes the transfer of the carbamoyl group from carbamoyl phosphate (CP) to the N(epsilon) atom of ornithine (ORN) to produce L-citrulline. The protein is Ornithine carbamoyltransferase of Rhizobium johnstonii (strain DSM 114642 / LMG 32736 / 3841) (Rhizobium leguminosarum bv. viciae).